An 82-amino-acid polypeptide reads, in one-letter code: Putative membrane protein insertion efficiency factor (82 aa).

It belongs to the UPF0161 family.

It is found in the cell inner membrane. Functionally, could be involved in insertion of integral membrane proteins into the membrane. This is Putative membrane protein insertion efficiency factor from Rickettsia typhi (strain ATCC VR-144 / Wilmington).